Here is a 379-residue protein sequence, read N- to C-terminus: Tubby-like F-box protein 7 (379 aa).

The segment covering 18–28 has biased composition (polar residues); the sequence is FHQGETTTAPE. Positions 18 to 41 are disordered; sequence FHQGETTTAPESESIPPPSNMAGS. Positions 42-97 constitute an F-box domain; that stretch reads SSWSAMLPELLGEIIRRVEETEDRWPQRRDVVTCACVSKKWREITHDFARSSLNSG. Disordered regions lie at residues 193 to 212 and 248 to 278; these read SQPP…RRFA and TLRC…IMKK.

This sequence belongs to the TUB family. As to expression, ubiquitous.

The sequence is that of Tubby-like F-box protein 7 from Arabidopsis thaliana (Mouse-ear cress).